A 238-amino-acid polypeptide reads, in one-letter code: Ribonuclease PH (238 aa).

Phosphate is bound by residues Arg-86 and 124–126 (GTR).

This sequence belongs to the RNase PH family. As to quaternary structure, homohexameric ring arranged as a trimer of dimers.

The catalysed reaction is tRNA(n+1) + phosphate = tRNA(n) + a ribonucleoside 5'-diphosphate. In terms of biological role, phosphorolytic 3'-5' exoribonuclease that plays an important role in tRNA 3'-end maturation. Removes nucleotide residues following the 3'-CCA terminus of tRNAs; can also add nucleotides to the ends of RNA molecules by using nucleoside diphosphates as substrates, but this may not be physiologically important. Probably plays a role in initiation of 16S rRNA degradation (leading to ribosome degradation) during starvation. The polypeptide is Ribonuclease PH (Vibrio atlanticus (strain LGP32) (Vibrio splendidus (strain Mel32))).